A 484-amino-acid polypeptide reads, in one-letter code: E-selectin (484 aa).

An N-terminal signal peptide occupies residues 1 to 22 (MIASQFLSALPLVLLLLRESGA). The region spanning 23–140 (WSYSASTETM…CSKKKLALCY (118 aa)) is the C-type lectin domain. The Extracellular portion of the chain corresponds to 23 to 429 (WSYSASTETM…CEAPAESKIP (407 aa)). 14 cysteine pairs are disulfide-bonded: C41-C139, C112-C131, C144-C155, C149-C164, C166-C175, C181-C222, C194-C204, C208-C235, C240-C285, C271-C298, C303-C348, C334-C361, C366-C407, and C393-C420. N-linked (GlcNAc...) asparagine glycans are attached at residues N61, N65, and N79. E102, N104, and E110 together coordinate Ca(2+). A carbohydrate is bound by residues 102–110 (EPNNKQSNE), 114–119 (EIYIKR), and 127–129 (NDE). Positions 127 and 128 each coordinate Ca(2+). In terms of domain architecture, EGF-like spans 141–176 (TAACTPTSCSGHGECIETINSSTCQCYPGFRGLQCE). N160 carries N-linked (GlcNAc...) asparagine glycosylation. Sushi domains lie at 179-237 (VECD…TCKA), 251-300 (VSCN…VCKA), 301-363 (VKCP…SCQV), and 364-422 (VQCS…TCEA). N201 carries N-linked (GlcNAc...) asparagine glycosylation. An N-linked (GlcNAc...) asparagine glycan is attached at N254. N-linked (GlcNAc...) asparagine glycosylation is found at N376 and N400. The chain crosses the membrane as a helical span at residues 430-451 (LAMGLAAGGVSFMTSASFLLWL). The Cytoplasmic segment spans residues 452 to 484 (LKRLRKRAKKFVPSSSSECLQPNGSYQMPSDLI).

It belongs to the selectin/LECAM family. In terms of assembly, interacts with SELPLG/PSGL1 and PODXL2 through the sialyl Lewis X epitope. SELPLG sulfation appears not to be required for this interaction.

Its subcellular location is the cell membrane. Functionally, cell-surface glycoprotein having a role in immunoadhesion. Mediates in the adhesion of blood neutrophils in cytokine-activated endothelium through interaction with SELPLG/PSGL1. May have a role in capillary morphogenesis. In Sus scrofa (Pig), this protein is E-selectin (SELE).